A 119-amino-acid chain; its full sequence is Large ribosomal subunit protein bL20 (119 aa).

Belongs to the bacterial ribosomal protein bL20 family.

Functionally, binds directly to 23S ribosomal RNA and is necessary for the in vitro assembly process of the 50S ribosomal subunit. It is not involved in the protein synthesizing functions of that subunit. The chain is Large ribosomal subunit protein bL20 from Clostridium novyi (strain NT).